The chain runs to 241 residues: 7-cyano-7-deazaguanine synthase (241 aa).

15–25 (FSGGQDSTTTL) lines the ATP pocket. The Zn(2+) site is built by Cys203, Cys218, Cys221, and Cys224.

This sequence belongs to the QueC family. The cofactor is Zn(2+).

It catalyses the reaction 7-carboxy-7-deazaguanine + NH4(+) + ATP = 7-cyano-7-deazaguanine + ADP + phosphate + H2O + H(+). It functions in the pathway purine metabolism; 7-cyano-7-deazaguanine biosynthesis. Functionally, catalyzes the ATP-dependent conversion of 7-carboxy-7-deazaguanine (CDG) to 7-cyano-7-deazaguanine (preQ(0)). This Azorhizobium caulinodans (strain ATCC 43989 / DSM 5975 / JCM 20966 / LMG 6465 / NBRC 14845 / NCIMB 13405 / ORS 571) protein is 7-cyano-7-deazaguanine synthase.